Consider the following 208-residue polypeptide: Putative 3-methyladenine DNA glycosylase (208 aa).

The protein belongs to the DNA glycosylase MPG family.

The sequence is that of Putative 3-methyladenine DNA glycosylase from Lactobacillus delbrueckii subsp. bulgaricus (strain ATCC 11842 / DSM 20081 / BCRC 10696 / JCM 1002 / NBRC 13953 / NCIMB 11778 / NCTC 12712 / WDCM 00102 / Lb 14).